The following is a 406-amino-acid chain: Arginine deiminase (406 aa).

Cys-396 (amidino-cysteine intermediate) is an active-site residue.

The protein belongs to the arginine deiminase family.

The protein localises to the cytoplasm. It carries out the reaction L-arginine + H2O = L-citrulline + NH4(+). It functions in the pathway amino-acid degradation; L-arginine degradation via ADI pathway; carbamoyl phosphate from L-arginine: step 1/2. This chain is Arginine deiminase, found in Vibrio campbellii (strain ATCC BAA-1116).